Reading from the N-terminus, the 177-residue chain is Large ribosomal subunit protein uL6 (177 aa).

The protein belongs to the universal ribosomal protein uL6 family. Part of the 50S ribosomal subunit.

This protein binds to the 23S rRNA, and is important in its secondary structure. It is located near the subunit interface in the base of the L7/L12 stalk, and near the tRNA binding site of the peptidyltransferase center. The protein is Large ribosomal subunit protein uL6 of Roseobacter denitrificans (strain ATCC 33942 / OCh 114) (Erythrobacter sp. (strain OCh 114)).